A 674-amino-acid polypeptide reads, in one-letter code: DNA ligase (674 aa).

NAD(+) contacts are provided by residues D42–D46, S91–M92, and E121. K123 serves as the catalytic N6-AMP-lysine intermediate. Residues R144, E178, K294, and K318 each contribute to the NAD(+) site. Residues C412, C415, C430, and C435 each coordinate Zn(2+). The BRCT domain maps to V596–D674.

This sequence belongs to the NAD-dependent DNA ligase family. LigA subfamily. Mg(2+) serves as cofactor. It depends on Mn(2+) as a cofactor.

The enzyme catalyses NAD(+) + (deoxyribonucleotide)n-3'-hydroxyl + 5'-phospho-(deoxyribonucleotide)m = (deoxyribonucleotide)n+m + AMP + beta-nicotinamide D-nucleotide.. Functionally, DNA ligase that catalyzes the formation of phosphodiester linkages between 5'-phosphoryl and 3'-hydroxyl groups in double-stranded DNA using NAD as a coenzyme and as the energy source for the reaction. It is essential for DNA replication and repair of damaged DNA. This Lacticaseibacillus paracasei (strain ATCC 334 / BCRC 17002 / CCUG 31169 / CIP 107868 / KCTC 3260 / NRRL B-441) (Lactobacillus paracasei) protein is DNA ligase.